The chain runs to 348 residues: Holliday junction branch migration complex subunit RuvB (348 aa).

Residues 4–184 form a large ATPase domain (RuvB-L) region; that stretch reads ADRLIAASGR…FGIVQRLEFY (181 aa). Residues I23, R24, G65, K68, T69, T70, 131 to 133, R174, Y184, and R221 each bind ATP; that span reads EDF. T69 is a Mg(2+) binding site. The interval 185 to 255 is small ATPAse domain (RuvB-S); the sequence is NDKDLSTIVS…VADMALNLLD (71 aa). Residues 258–348 are head domain (RuvB-H); it reads ERGFDHSDRR…GGDFSGPGDE (91 aa). R294, R313, and R318 together coordinate DNA.

This sequence belongs to the RuvB family. As to quaternary structure, homohexamer. Forms an RuvA(8)-RuvB(12)-Holliday junction (HJ) complex. HJ DNA is sandwiched between 2 RuvA tetramers; dsDNA enters through RuvA and exits via RuvB. An RuvB hexamer assembles on each DNA strand where it exits the tetramer. Each RuvB hexamer is contacted by two RuvA subunits (via domain III) on 2 adjacent RuvB subunits; this complex drives branch migration. In the full resolvosome a probable DNA-RuvA(4)-RuvB(12)-RuvC(2) complex forms which resolves the HJ.

The protein localises to the cytoplasm. It carries out the reaction ATP + H2O = ADP + phosphate + H(+). The RuvA-RuvB-RuvC complex processes Holliday junction (HJ) DNA during genetic recombination and DNA repair, while the RuvA-RuvB complex plays an important role in the rescue of blocked DNA replication forks via replication fork reversal (RFR). RuvA specifically binds to HJ cruciform DNA, conferring on it an open structure. The RuvB hexamer acts as an ATP-dependent pump, pulling dsDNA into and through the RuvAB complex. RuvB forms 2 homohexamers on either side of HJ DNA bound by 1 or 2 RuvA tetramers; 4 subunits per hexamer contact DNA at a time. Coordinated motions by a converter formed by DNA-disengaged RuvB subunits stimulates ATP hydrolysis and nucleotide exchange. Immobilization of the converter enables RuvB to convert the ATP-contained energy into a lever motion, pulling 2 nucleotides of DNA out of the RuvA tetramer per ATP hydrolyzed, thus driving DNA branch migration. The RuvB motors rotate together with the DNA substrate, which together with the progressing nucleotide cycle form the mechanistic basis for DNA recombination by continuous HJ branch migration. Branch migration allows RuvC to scan DNA until it finds its consensus sequence, where it cleaves and resolves cruciform DNA. The sequence is that of Holliday junction branch migration complex subunit RuvB from Pseudomonas putida (strain ATCC 700007 / DSM 6899 / JCM 31910 / BCRC 17059 / LMG 24140 / F1).